Reading from the N-terminus, the 209-residue chain is Orotate phosphoribosyltransferase (209 aa).

5-phospho-alpha-D-ribose 1-diphosphate-binding positions include Arg-96, Lys-100, His-102, and 122-130; that span reads EDLISTGGS. Residue Ser-126 coordinates orotate.

The protein belongs to the purine/pyrimidine phosphoribosyltransferase family. PyrE subfamily. Homodimer. Requires Mg(2+) as cofactor.

The enzyme catalyses orotidine 5'-phosphate + diphosphate = orotate + 5-phospho-alpha-D-ribose 1-diphosphate. It functions in the pathway pyrimidine metabolism; UMP biosynthesis via de novo pathway; UMP from orotate: step 1/2. In terms of biological role, catalyzes the transfer of a ribosyl phosphate group from 5-phosphoribose 1-diphosphate to orotate, leading to the formation of orotidine monophosphate (OMP). The polypeptide is Orotate phosphoribosyltransferase (Streptococcus pyogenes serotype M1).